The chain runs to 218 residues: Molybdenum cofactor guanylyltransferase (218 aa).

GTP is bound by residues 16–18 (LAG), Lys-28, Asn-56, Asp-74, and Asp-109. Mg(2+) is bound at residue Asp-109.

Belongs to the MobA family. In terms of assembly, monomer. Mg(2+) is required as a cofactor.

Its subcellular location is the cytoplasm. It catalyses the reaction Mo-molybdopterin + GTP + H(+) = Mo-molybdopterin guanine dinucleotide + diphosphate. Its function is as follows. Transfers a GMP moiety from GTP to Mo-molybdopterin (Mo-MPT) cofactor (Moco or molybdenum cofactor) to form Mo-molybdopterin guanine dinucleotide (Mo-MGD) cofactor. The chain is Molybdenum cofactor guanylyltransferase from Rhizobium meliloti (strain 1021) (Ensifer meliloti).